A 264-amino-acid chain; its full sequence is Indole-3-glycerol phosphate synthase (264 aa).

This sequence belongs to the TrpC family.

The catalysed reaction is 1-(2-carboxyphenylamino)-1-deoxy-D-ribulose 5-phosphate + H(+) = (1S,2R)-1-C-(indol-3-yl)glycerol 3-phosphate + CO2 + H2O. It participates in amino-acid biosynthesis; L-tryptophan biosynthesis; L-tryptophan from chorismate: step 4/5. This chain is Indole-3-glycerol phosphate synthase, found in Stenotrophomonas maltophilia (strain K279a).